The primary structure comprises 185 residues: Capsid protein (185 aa).

The tract at residues 136–185 (NAPILSTLPETTVVRRRDRGRSPRRRTPSPRRRRSQSPRRRRSQSRESQC) is disordered. Positions 149–178 (VRRRDRGRSPRRRTPSPRRRRSQSPRRRRS) are enriched in basic residues. Phosphoserine; by host occurs at positions 157, 164, and 172. Residues 157–163 (SPRRRTP) form a 1; half-length repeat. The tract at residues 157 to 179 (SPRRRTPSPRRRRSQSPRRRRSQ) is 3 X 8 AA repeats of S-P-R-R-R-[PR]-S-Q. Positions 160 to 177 (RRTPSPRRRRSQSPRRRR) match the Bipartite nuclear localization signal motif. 2 consecutive repeat copies span residues 164-171 (SPRRRRSQ) and 172-179 (SPRRRRSQ). Positions 179 to 185 (QSRESQC) are RNA binding.

It belongs to the orthohepadnavirus core antigen family. Homodimerizes, then multimerizes. Interacts with cytosol exposed regions of viral L glycoprotein present in the reticulum-to-Golgi compartment. Interacts with human FLNB. Phosphorylated form interacts with host importin alpha; this interaction depends on the exposure of the NLS, which itself depends upon genome maturation and/or phosphorylation of the capsid protein. Interacts with host NUP153. In terms of processing, phosphorylated by host SRPK1, SRPK2, and maybe protein kinase C or GAPDH. Phosphorylation is critical for pregenomic RNA packaging. Protein kinase C phosphorylation is stimulated by HBx protein and may play a role in transport of the viral genome to the nucleus at the late step during the viral replication cycle.

Its subcellular location is the virion. It is found in the host cytoplasm. In terms of biological role, self assembles to form an icosahedral capsid. Most capsids appear to be large particles with an icosahedral symmetry of T=4 and consist of 240 copies of capsid protein, though a fraction forms smaller T=3 particles consisting of 180 capsid proteins. Entering capsids are transported along microtubules to the nucleus. Phosphorylation of the capsid is thought to induce exposure of nuclear localization signal in the C-terminal portion of the capsid protein that allows binding to the nuclear pore complex via the importin (karyopherin-) alpha and beta. Capsids are imported in intact form through the nuclear pore into the nuclear basket, where it probably binds NUP153. Only capsids that contain the mature viral genome can release the viral DNA and capsid protein into the nucleoplasm. Immature capsids get stuck in the basket. Capsids encapsulate the pre-genomic RNA and the P protein. Pre-genomic RNA is reverse-transcribed into DNA while the capsid is still in the cytoplasm. The capsid can then either be directed to the nucleus, providing more genomes for transcription, or bud through the endoplasmic reticulum to provide new virions. This Hepatitis B virus genotype A1 subtype adw (isolate Philippines/pFDW294/1988) (HBV-A) protein is Capsid protein.